The sequence spans 493 residues: GTPase Der (493 aa).

Positions 3–166 constitute an EngA-type G 1 domain; that stretch reads PVIALVGRPN…EALGIFPKDN (164 aa). GTP contacts are provided by residues 9-16, 56-60, and 118-121; these read GRPNVGKS, DTGGI, and NKVD. The segment covering 167–184 has biased composition (acidic residues); that stretch reads VEEEGEGEPASEEVAEGE. Residues 167–195 are disordered; it reads VEEEGEGEPASEEVAEGEEPTRIPGPSEK. Positions 198–371 constitute an EngA-type G 2 domain; the sequence is IKIAIIGRPN…SVQESFRSAV (174 aa). GTP contacts are provided by residues 204 to 211, 251 to 255, and 316 to 319; these read GRPNVGKS, DTAGV, and NKWD. The KH-like domain maps to 372–456; it reads TRWPTSRLTS…PIRIEYKGGE (85 aa). A compositionally biased stretch (basic and acidic residues) spans 454–463; the sequence is GGENPYEGKK. Residues 454–493 are disordered; sequence GGENPYEGKKNSLTARQVNKKRRLMSHHKKAEKKKKDKRR. Over residues 471 to 493 the composition is skewed to basic residues; that stretch reads VNKKRRLMSHHKKAEKKKKDKRR.

Belongs to the TRAFAC class TrmE-Era-EngA-EngB-Septin-like GTPase superfamily. EngA (Der) GTPase family. In terms of assembly, associates with the 50S ribosomal subunit.

GTPase that plays an essential role in the late steps of ribosome biogenesis. The sequence is that of GTPase Der from Pseudomonas aeruginosa (strain LESB58).